The sequence spans 264 residues: Thymidylate synthase (264 aa).

Arg-21 serves as a coordination point for dUMP. Position 51 (His-51) interacts with (6R)-5,10-methylene-5,6,7,8-tetrahydrofolate. 126 to 127 serves as a coordination point for dUMP; the sequence is RR. The active-site Nucleophile is Cys-146. Residues 166 to 169, Asn-177, and 207 to 209 each bind dUMP; these read RSCD and HLY. Asp-169 provides a ligand contact to (6R)-5,10-methylene-5,6,7,8-tetrahydrofolate. Ala-263 lines the (6R)-5,10-methylene-5,6,7,8-tetrahydrofolate pocket.

It belongs to the thymidylate synthase family. Bacterial-type ThyA subfamily. Homodimer.

It is found in the cytoplasm. It catalyses the reaction dUMP + (6R)-5,10-methylene-5,6,7,8-tetrahydrofolate = 7,8-dihydrofolate + dTMP. It participates in pyrimidine metabolism; dTTP biosynthesis. In terms of biological role, catalyzes the reductive methylation of 2'-deoxyuridine-5'-monophosphate (dUMP) to 2'-deoxythymidine-5'-monophosphate (dTMP) while utilizing 5,10-methylenetetrahydrofolate (mTHF) as the methyl donor and reductant in the reaction, yielding dihydrofolate (DHF) as a by-product. This enzymatic reaction provides an intracellular de novo source of dTMP, an essential precursor for DNA biosynthesis. The chain is Thymidylate synthase from Shewanella baltica (strain OS155 / ATCC BAA-1091).